Consider the following 394-residue polypeptide: Elongation factor Tu 2 (394 aa).

Residues 10–204 (KPHVNVGTIG…YLDSYIPEPE (195 aa)) enclose the tr-type G domain. Residues 19–26 (GHVDHGKT) form a G1 region. 19–26 (GHVDHGKT) lines the GTP pocket. T26 is a Mg(2+) binding site. The segment at 60–64 (GITIN) is G2. The segment at 81 to 84 (DCPG) is G3. GTP is bound by residues 81–85 (DCPGH) and 136–139 (NKCD). The G4 stretch occupies residues 136 to 139 (NKCD). Residues 174–176 (SAL) are G5.

This sequence belongs to the TRAFAC class translation factor GTPase superfamily. Classic translation factor GTPase family. EF-Tu/EF-1A subfamily. In terms of assembly, monomer.

It is found in the cytoplasm. It catalyses the reaction GTP + H2O = GDP + phosphate + H(+). In terms of biological role, GTP hydrolase that promotes the GTP-dependent binding of aminoacyl-tRNA to the A-site of ribosomes during protein biosynthesis. This chain is Elongation factor Tu 2, found in Serratia proteamaculans (strain 568).